A 216-amino-acid polypeptide reads, in one-letter code: Phosphatidylserine decarboxylase proenzyme (216 aa).

Residue S183 is the Schiff-base intermediate with substrate; via pyruvic acid of the active site. S183 bears the Pyruvic acid (Ser); by autocatalysis mark.

It belongs to the phosphatidylserine decarboxylase family. PSD-A subfamily. In terms of assembly, heterodimer of a large membrane-associated beta subunit and a small pyruvoyl-containing alpha subunit. Requires pyruvate as cofactor. In terms of processing, is synthesized initially as an inactive proenzyme. Formation of the active enzyme involves a self-maturation process in which the active site pyruvoyl group is generated from an internal serine residue via an autocatalytic post-translational modification. Two non-identical subunits are generated from the proenzyme in this reaction, and the pyruvate is formed at the N-terminus of the alpha chain, which is derived from the carboxyl end of the proenzyme. The post-translation cleavage follows an unusual pathway, termed non-hydrolytic serinolysis, in which the side chain hydroxyl group of the serine supplies its oxygen atom to form the C-terminus of the beta chain, while the remainder of the serine residue undergoes an oxidative deamination to produce ammonia and the pyruvoyl prosthetic group on the alpha chain.

The protein localises to the cell membrane. The enzyme catalyses a 1,2-diacyl-sn-glycero-3-phospho-L-serine + H(+) = a 1,2-diacyl-sn-glycero-3-phosphoethanolamine + CO2. It participates in phospholipid metabolism; phosphatidylethanolamine biosynthesis; phosphatidylethanolamine from CDP-diacylglycerol: step 2/2. Catalyzes the formation of phosphatidylethanolamine (PtdEtn) from phosphatidylserine (PtdSer). This Chlorobaculum tepidum (strain ATCC 49652 / DSM 12025 / NBRC 103806 / TLS) (Chlorobium tepidum) protein is Phosphatidylserine decarboxylase proenzyme.